The following is a 347-amino-acid chain: D-alanine--D-alanine ligase (347 aa).

One can recognise an ATP-grasp domain in the interval 133-342 (KQAFAQASLP…FPDLVHRLIQ (210 aa)). Residue 169 to 224 (ETELGYPCFVKPANLGSSVGIAKVRDRAELEAALDQAAALDRRLIIEAAIDNPREV) participates in ATP binding. Mg(2+)-binding residues include Asp296, Glu309, and Asn311.

It belongs to the D-alanine--D-alanine ligase family. Requires Mg(2+) as cofactor. It depends on Mn(2+) as a cofactor.

Its subcellular location is the cytoplasm. The catalysed reaction is 2 D-alanine + ATP = D-alanyl-D-alanine + ADP + phosphate + H(+). It functions in the pathway cell wall biogenesis; peptidoglycan biosynthesis. In terms of biological role, cell wall formation. The sequence is that of D-alanine--D-alanine ligase from Synechococcus elongatus (strain ATCC 33912 / PCC 7942 / FACHB-805) (Anacystis nidulans R2).